A 37-amino-acid chain; its full sequence is Conotoxin r11e (37 aa).

4 cysteine pairs are disulfide-bonded: Cys-2–Cys-16, Cys-9–Cys-21, Cys-15–Cys-26, and Cys-20–Cys-33. Residues Glu-13 and Glu-14 each carry the 4-carboxyglutamate modification. Trp-34 bears the 6'-bromotryptophan mark.

As to expression, expressed by the venom duct.

It localises to the secreted. Functionally, causes hyperactivity, circular motion, convulsion, urination and death, when injected into 13- to 15-day-old mice. Causes gasping, backward swimming or swimming in a vertical direction and death, when intraperitoneally injected into goldfish. The sequence is that of Conotoxin r11e from Conus radiatus (Rayed cone).